A 227-amino-acid chain; its full sequence is C4-dicarboxylate TRAP transporter small permease protein DctQ (227 aa).

The Cytoplasmic segment spans residues 1–7; it reads MLRILDR. The chain crosses the membrane as a helical span at residues 8–28; sequence AEEVLIAALIATATVLIFVSV. The Periplasmic portion of the chain corresponds to 29-67; sequence THRFTLGFVADFVGFFRGHGMTGAAAAAKSLYTTLRGIN. Residues 68 to 88 form a helical membrane-spanning segment; sequence LVWAQELCIILFVWMAKFGAA. At 89–112 the chain is on the cytoplasmic side; sequence YGVRTGIHVGIDVLINRLDAPKRR. A helical transmembrane segment spans residues 113-133; that stretch reads FFILLGLGAGALFTGIIATLG. Over 134–149 the chain is Periplasmic; it reads ANFVLHMYHASSTSPD. A helical transmembrane segment spans residues 150–170; sequence LELPMWLVYLAIPMGSSLMCF. Residues 171–227 are Cytoplasmic-facing; the sequence is RFLQVAFGFARTGELPHHDHGHVDGVDTENEGIDAEGDVLLHSPLTPRDLVEKPKDN.

This sequence belongs to the TRAP transporter small permease family. In terms of assembly, the complex comprises the extracytoplasmic solute receptor protein DctP, and the two transmembrane proteins DctQ and DctM.

It is found in the cell inner membrane. Its function is as follows. Part of the tripartite ATP-independent periplasmic (TRAP) transport system DctPQM involved in C4-dicarboxylates uptake. The chain is C4-dicarboxylate TRAP transporter small permease protein DctQ from Rhodobacter capsulatus (Rhodopseudomonas capsulata).